The following is a 277-amino-acid chain: MEMO1 family protein TRQ2_0860 (277 aa).

The protein belongs to the MEMO1 family.

In Thermotoga sp. (strain RQ2), this protein is MEMO1 family protein TRQ2_0860.